The primary structure comprises 198 residues: NADH-quinone oxidoreductase subunit C (198 aa).

The protein belongs to the complex I 30 kDa subunit family. NDH-1 is composed of 14 different subunits. Subunits NuoB, C, D, E, F, and G constitute the peripheral sector of the complex.

It localises to the cell inner membrane. The enzyme catalyses a quinone + NADH + 5 H(+)(in) = a quinol + NAD(+) + 4 H(+)(out). NDH-1 shuttles electrons from NADH, via FMN and iron-sulfur (Fe-S) centers, to quinones in the respiratory chain. The immediate electron acceptor for the enzyme in this species is believed to be ubiquinone. Couples the redox reaction to proton translocation (for every two electrons transferred, four hydrogen ions are translocated across the cytoplasmic membrane), and thus conserves the redox energy in a proton gradient. This Janthinobacterium sp. (strain Marseille) (Minibacterium massiliensis) protein is NADH-quinone oxidoreductase subunit C.